The primary structure comprises 61 residues: MDPNCSCAAGVSCTCAGSCKCKECKCTSCKKSCCSCCPVGCSKCAQGCVCKGASEKCSCCD.

Met1 carries the post-translational modification N-acetylmethionine. Residues 1–29 (MDPNCSCAAGVSCTCAGSCKCKECKCTSC) form a beta region. A divalent metal cation contacts are provided by Cys5, Cys7, Cys13, Cys15, Cys19, Cys21, Cys24, Cys26, Cys29, Cys33, Cys34, Cys36, Cys37, Cys41, Cys44, Cys48, Cys50, and Cys57. The tract at residues 30 to 61 (KKSCCSCCPVGCSKCAQGCVCKGASEKCSCCD) is alpha. Phosphoserine is present on Ser58. A divalent metal cation is bound by residues Cys59 and Cys60.

This sequence belongs to the metallothionein superfamily. Type 1 family. In terms of assembly, monomer.

In terms of biological role, metallothioneins have a high content of cysteine residues that bind various heavy metals; these proteins are transcriptionally regulated by both heavy metals and glucocorticoids. The chain is Metallothionein-1F (MT1F) from Homo sapiens (Human).